A 227-amino-acid polypeptide reads, in one-letter code: Isopentenyl-diphosphate Delta-isomerase 1 (227 aa).

Substrate is bound at residue lysine 36. Residues histidine 40 and histidine 51 each coordinate Mg(2+). A Nudix hydrolase domain is found at 49–199; it reads LLHRAFSVFL…EIKITPWFKI (151 aa). Substrate-binding residues include arginine 70 and lysine 74. The active site involves cysteine 86. Serine 87 is a substrate binding site. Residues glutamate 146 and glutamate 148 each contribute to the Mg(2+) site. Residue glutamate 148 is part of the active site. Position 176 is an N6-acetyllysine (lysine 176). Positions 225–227 match the Microbody targeting signal motif; sequence YRM.

It belongs to the IPP isomerase type 1 family. As to quaternary structure, monomer. Mg(2+) serves as cofactor.

The protein resides in the peroxisome. It carries out the reaction isopentenyl diphosphate = dimethylallyl diphosphate. It participates in isoprenoid biosynthesis; dimethylallyl diphosphate biosynthesis; dimethylallyl diphosphate from isopentenyl diphosphate: step 1/1. In terms of biological role, catalyzes the 1,3-allylic rearrangement of the homoallylic substrate isopentenyl (IPP) to its highly electrophilic allylic isomer, dimethylallyl diphosphate (DMAPP). The chain is Isopentenyl-diphosphate Delta-isomerase 1 (IDI1) from Homo sapiens (Human).